We begin with the raw amino-acid sequence, 317 residues long: tRNA dimethylallyltransferase (317 aa).

14-21 (GPTASGKS) contributes to the ATP binding site. 16-21 (TASGKS) is a substrate binding site. Interaction with substrate tRNA regions lie at residues 39–42 (DSVL) and 163–167 (QRIQR).

It belongs to the IPP transferase family. As to quaternary structure, monomer. Mg(2+) serves as cofactor.

The catalysed reaction is adenosine(37) in tRNA + dimethylallyl diphosphate = N(6)-dimethylallyladenosine(37) in tRNA + diphosphate. Its function is as follows. Catalyzes the transfer of a dimethylallyl group onto the adenine at position 37 in tRNAs that read codons beginning with uridine, leading to the formation of N6-(dimethylallyl)adenosine (i(6)A). The polypeptide is tRNA dimethylallyltransferase (Xylella fastidiosa (strain 9a5c)).